A 187-amino-acid polypeptide reads, in one-letter code: Large ribosomal subunit protein bL9 (187 aa).

The tract at residues alanine 155–alanine 187 is disordered. Acidic residues predominate over residues glutamate 166–alanine 187.

This sequence belongs to the bacterial ribosomal protein bL9 family.

In terms of biological role, binds to the 23S rRNA. The chain is Large ribosomal subunit protein bL9 from Rhodospirillum centenum (strain ATCC 51521 / SW).